A 728-amino-acid chain; its full sequence is Catalase-peroxidase 1 (728 aa).

The tryptophyl-tyrosyl-methioninium (Trp-Tyr) (with M-244) cross-link spans 91–218 (WHSAGTYRTA…LAAVQMGLIY (128 aa)). Histidine 92 acts as the Proton acceptor in catalysis. The segment at residues 218–244 (YVNPEGPDGNPDPVAAAHDIRETFARM) is a cross-link (tryptophyl-tyrosyl-methioninium (Tyr-Met) (with W-91)). Residue histidine 259 participates in heme b binding.

It belongs to the peroxidase family. Peroxidase/catalase subfamily. As to quaternary structure, homodimer or homotetramer. The cofactor is heme b. Post-translationally, formation of the three residue Trp-Tyr-Met cross-link is important for the catalase, but not the peroxidase activity of the enzyme.

It carries out the reaction H2O2 + AH2 = A + 2 H2O. The catalysed reaction is 2 H2O2 = O2 + 2 H2O. In terms of biological role, bifunctional enzyme with both catalase and broad-spectrum peroxidase activity. This Burkholderia cenocepacia (strain ATCC BAA-245 / DSM 16553 / LMG 16656 / NCTC 13227 / J2315 / CF5610) (Burkholderia cepacia (strain J2315)) protein is Catalase-peroxidase 1.